Reading from the N-terminus, the 354-residue chain is Phospho-N-acetylmuramoyl-pentapeptide-transferase (354 aa).

10 consecutive transmembrane segments (helical) span residues 23-43, 66-86, 88-108, 138-158, 161-181, 193-213, 227-247, 257-277, 282-302, and 331-351; these read IAFF…IAWA, TPTM…LLCS, LTNT…FIGF, FALS…FIPF, YALF…ITAS, GLAS…VYLC, VVGV…ILGF, VFMG…TGVV, ILLI…ILQV, and KIIV…LTTL.

This sequence belongs to the glycosyltransferase 4 family. MraY subfamily. The cofactor is Mg(2+).

It is found in the cell inner membrane. The enzyme catalyses UDP-N-acetyl-alpha-D-muramoyl-L-alanyl-gamma-D-glutamyl-meso-2,6-diaminopimeloyl-D-alanyl-D-alanine + di-trans,octa-cis-undecaprenyl phosphate = di-trans,octa-cis-undecaprenyl diphospho-N-acetyl-alpha-D-muramoyl-L-alanyl-D-glutamyl-meso-2,6-diaminopimeloyl-D-alanyl-D-alanine + UMP. It participates in cell wall biogenesis; peptidoglycan biosynthesis. Catalyzes the initial step of the lipid cycle reactions in the biosynthesis of the cell wall peptidoglycan: transfers peptidoglycan precursor phospho-MurNAc-pentapeptide from UDP-MurNAc-pentapeptide onto the lipid carrier undecaprenyl phosphate, yielding undecaprenyl-pyrophosphoryl-MurNAc-pentapeptide, known as lipid I. In Campylobacter hominis (strain ATCC BAA-381 / DSM 21671 / CCUG 45161 / LMG 19568 / NCTC 13146 / CH001A), this protein is Phospho-N-acetylmuramoyl-pentapeptide-transferase.